A 145-amino-acid polypeptide reads, in one-letter code: Bacilliredoxin ABC2045 (145 aa).

It belongs to the bacilliredoxin family.

The sequence is that of Bacilliredoxin ABC2045 from Shouchella clausii (strain KSM-K16) (Alkalihalobacillus clausii).